Here is a 339-residue protein sequence, read N- to C-terminus: GTP 3',8-cyclase (339 aa).

A Radical SAM core domain is found at 20 to 241 (NFDRKFEYLR…WTQKQSLSHD (222 aa)). Arginine 29 contributes to the GTP binding site. 2 residues coordinate [4Fe-4S] cluster: cysteine 36 and cysteine 40. Tyrosine 42 lines the S-adenosyl-L-methionine pocket. Cysteine 43 is a [4Fe-4S] cluster binding site. A GTP-binding site is contributed by arginine 78. An S-adenosyl-L-methionine-binding site is contributed by glycine 82. Residue threonine 109 coordinates GTP. An S-adenosyl-L-methionine-binding site is contributed by serine 133. GTP is bound at residue lysine 170. Position 204 (methionine 204) interacts with S-adenosyl-L-methionine. Residues cysteine 267 and cysteine 270 each contribute to the [4Fe-4S] cluster site. 272–274 (RLR) contacts GTP. Residue cysteine 284 coordinates [4Fe-4S] cluster.

Belongs to the radical SAM superfamily. MoaA family. Monomer and homodimer. Requires [4Fe-4S] cluster as cofactor.

It catalyses the reaction GTP + AH2 + S-adenosyl-L-methionine = (8S)-3',8-cyclo-7,8-dihydroguanosine 5'-triphosphate + 5'-deoxyadenosine + L-methionine + A + H(+). The protein operates within cofactor biosynthesis; molybdopterin biosynthesis. In terms of biological role, catalyzes the cyclization of GTP to (8S)-3',8-cyclo-7,8-dihydroguanosine 5'-triphosphate. This chain is GTP 3',8-cyclase, found in Psychromonas ingrahamii (strain DSM 17664 / CCUG 51855 / 37).